Reading from the N-terminus, the 3595-residue chain is Replicase polyprotein 1ab (3595 aa).

The C4-type; atypical zinc finger occupies 3 to 23 (CECPRSNLVVMCSGAFCCVLC). The Peptidase C31 domain occupies 56-164 (SGLEGRYCAL…PTTIPFNTTG (109 aa)). Residues cysteine 63 and histidine 130 each act as for Nsp1-alpha papain-like cysteine proteinase activity in the active site. One can recognise a Peptidase C32 domain in the interval 239–350 (LSFEHGRCWL…LKLPGKTYFG (112 aa)). Residues cysteine 246 and histidine 309 each act as for Nsp1-beta papain-like cysteine proteinase activity in the active site. Residues cysteine 378 and histidine 430 each act as for Nsp2 cysteine proteinase activity in the active site. The interval 482–527 (RRGGGKKSGQSSGVRAPGRTTPDLAGDWGKAVDDQEKTASKVTTDK) is disordered. Basic and acidic residues predominate over residues 511–520 (KAVDDQEKTA). The Peptidase C33 domain maps to 633-736 (TFIPPPDGGC…HGWCSSLLSE (104 aa)). The segment at 808-862 (QVRTVDPSQPAAPLPPVPRPRKRKAAAQQVSKVPSEQDPSLAHDPPEKPDSVRPP) is disordered. Residues 851-860 (DPPEKPDSVR) are compositionally biased toward basic and acidic residues. A run of 7 helical transmembrane segments spans residues 922–942 (MFFL…AGVI), 951–971 (ILCC…AISS), 1019–1039 (VALF…VIGV), 1239–1259 (IFRT…GYWV), 1316–1336 (PYIV…PGII), 1345–1365 (ALLP…IIAA), and 1381–1401 (AFVD…GWIL). The tract at residues 922-1039 (MFFLFLGSPL…MVDVLLVIGV (118 aa)) is HD1. Residues 1239 to 1399 (IFRTALAAAW…VVLTALLVGW (161 aa)) form an HD2 region. One can recognise a Peptidase S32 domain in the interval 1464–1664 (GLLREKTRAS…RLLESSINLE (201 aa)). Residues histidine 1502, aspartate 1527, and serine 1580 each act as charge relay system; for 3C-like serine proteinase activity in the active site. 4 consecutive transmembrane segments (helical) span residues 1673–1693 (IIVA…PFVV), 1711–1731 (YNYS…IFFI), 1744–1764 (ALIC…IILG), and 1784–1804 (AIAI…LELF). An HD3 region spans residues 1687-1804 (LSIPFVVAFF…CVAACCLELF (118 aa)). Residues 2083–2253 (DMNRLRAIIS…YPYKLHPVRG (171 aa)) enclose the NiRAN domain. The 135-residue stretch at 2491 to 2625 (GRCLETDLAS…LNESDDLPNF (135 aa)) folds into the RdRp catalytic domain. The AV ZBD domain occupies 2746–2812 (GKEVQVCSIC…IPILKDRTKF (67 aa)). The Zn(2+) site is built by cysteine 2752, cysteine 2755, cysteine 2765, cysteine 2770, cysteine 2773, histidine 2777, histidine 2779, cysteine 2782, cysteine 2789, histidine 2791, cysteine 2798, and cysteine 2801. The region spanning 2862 to 3022 (DLPDGKYSMK…VFELMKKNAL (161 aa)) is the (+)RNA virus helicase ATP-binding domain. 2897 to 2904 (GPPGSGKT) lines the ATP pocket. The 135-residue stretch at 3023 to 3157 (HAIYRFGQNI…DGKARVMLSD (135 aa)) folds into the (+)RNA virus helicase C-terminal domain. The AV-Nsp11N/CoV-Nsp15M domain maps to 3196-3292 (SGSLSPLPRV…LTKFLDGRAV (97 aa)). Positions 3294 to 3416 (MEDSVYSTGR…MVWRDQTMYF (123 aa)) constitute a NendoU domain. Catalysis depends on residues histidine 3325, histidine 3340, and lysine 3369.

It belongs to the arteriviridae polyprotein family. Specific enzymatic cleavages in vivo by its own proteases yield mature proteins. There are two alternative pathways for processing. Either nsp4-5 is cleaved, which represents the major pathway or the nsp5-6 and nsp6-7 are processed, which represents the minor pathway. The major pathway occurs when nsp2 acts as a cofactor for nsp4.

The protein localises to the host membrane. The protein resides in the host cytoplasm. It is found in the host perinuclear region. It catalyses the reaction RNA(n) + a ribonucleoside 5'-triphosphate = RNA(n+1) + diphosphate. The catalysed reaction is ATP + H2O = ADP + phosphate + H(+). It carries out the reaction uridylyl-uridylyl-ribonucleotide-RNA = a 3'-end uridylyl-2',3'-cyclophospho-uridine-RNA + a 5'-end dephospho-ribonucleoside-RNA. Functionally, the replicase polyprotein 1ab is a multifunctional protein: it contains the activities necessary for the transcription of negative stranded RNA, leader RNA, subgenomic mRNAs and progeny virion RNA as well as proteinases responsible for the cleavage of the polyprotein into functional products. In terms of biological role, the Nsp1 chain is essential for viral subgenomic mRNA synthesis. Its function is as follows. The 3C-like serine proteinase chain is responsible for the majority of cleavages as it cleaves the C-terminus of the polyprotein. Plays a role in viral transcription/replication and prevents the simultaneous activation of host cell dsRNA sensors, such as MDA5/IFIH1, OAS, and PKR. Acts by degrading the 5'-polyuridines generated during replication of the poly(A) region of viral genomic and subgenomic RNAs. Catalyzes a two-step reaction in which a 2'3'-cyclic phosphate (2'3'-cP) is first generated by 2'-O transesterification, which is then hydrolyzed to a 3'-phosphate (3'-P). If not degraded, poly(U) RNA would hybridize with poly(A) RNA tails and activate host dsRNA sensors. Functionally, the helicase chain, which contains a zinc finger structure, displays RNA and DNA duplex-unwinding activities with 5' to 3' polarity. The chain is Replicase polyprotein 1ab (rep) from Simian hemorrhagic fever virus (SHFV).